The primary structure comprises 199 residues: Peroxynitrite isomerase (199 aa).

The short motif at 20-26 (GVWEGSG) is the GXWXGXG element. Heme b is bound by residues Lys-158 and His-190.

It belongs to the nitrobindin family. In terms of assembly, homodimer. Requires heme b as cofactor.

The enzyme catalyses peroxynitrite = nitrate. It functions in the pathway nitrogen metabolism. Heme-binding protein able to scavenge peroxynitrite and to protect free L-tyrosine against peroxynitrite-mediated nitration, by acting as a peroxynitrite isomerase that converts peroxynitrite to nitrate. Therefore, this protein likely plays a role in peroxynitrite sensing and in the detoxification of reactive nitrogen and oxygen species (RNS and ROS, respectively). Is able to bind nitric oxide (NO) in vitro, but may act as a sensor of peroxynitrite levels in vivo. The sequence is that of Peroxynitrite isomerase from Clavibacter sepedonicus (Clavibacter michiganensis subsp. sepedonicus).